Reading from the N-terminus, the 178-residue chain is Small ribosomal subunit protein uS5 (178 aa).

The region spanning 15-78 is the S5 DRBM domain; sequence FEEKIIEIRR…SAAKRNIIEV (64 aa).

It belongs to the universal ribosomal protein uS5 family. In terms of assembly, part of the 30S ribosomal subunit. Contacts proteins S4 and S8.

Functionally, with S4 and S12 plays an important role in translational accuracy. In terms of biological role, located at the back of the 30S subunit body where it stabilizes the conformation of the head with respect to the body. This is Small ribosomal subunit protein uS5 from Thermotoga sp. (strain RQ2).